A 190-amino-acid chain; its full sequence is Large ribosomal subunit protein bL17 (190 aa).

The interval 128–190 (KKTAGRKAAQ…VEENNEQNKA (63 aa)) is disordered. Low complexity predominate over residues 143-154 (ALAPAEETPAPT). A compositionally biased stretch (acidic residues) spans 179–190 (LAVEENNEQNKA).

Belongs to the bacterial ribosomal protein bL17 family. As to quaternary structure, part of the 50S ribosomal subunit. Contacts protein L32.

This Salinispora tropica (strain ATCC BAA-916 / DSM 44818 / JCM 13857 / NBRC 105044 / CNB-440) protein is Large ribosomal subunit protein bL17.